Consider the following 254-residue polypeptide: HTH-type transcriptional repressor DasR (254 aa).

Residues 17-87 (RTARVPKYYR…QGKGTFVAKP (71 aa)) enclose the HTH gntR-type domain. Residues 47–66 (ERTLAAEFDTSRTTVRQALQ) constitute a DNA-binding region (H-T-H motif).

It localises to the cytoplasm. With respect to regulation, binding to the target genes is abolished by GlcN6P, a central molecule in N-acetylglucosamine metabolism. In terms of biological role, global regulator that is part of the nutrient-sensing system. In the absence of glucosamine 6-P (GlcN6P), represses the phosphotransferase system (PTS) specific for the uptake of N-acetylglucosamine (PTSNag), and genes involved in the metabolism of chitin, as well as several genes involved in development, thereby linking carbon availability to morphogenesis. Also regulates the expression of the ABC transporters DasABC and NgcEFG, which are involved in N,N'-diacetylchitobiose ((GlcNAc)2) uptake. Binds to the DNA consensus sequence 5'-ACTGGTCTAGACCACT-3'. In Streptomyces coelicolor (strain ATCC BAA-471 / A3(2) / M145), this protein is HTH-type transcriptional repressor DasR (dasR).